We begin with the raw amino-acid sequence, 205 residues long: Putative lipoprotein LppC (205 aa).

Positions 1–27 (MESPMTSTLHRTPLATAGLALVVALGG) are cleaved as a signal peptide. Cys-28 carries N-palmitoyl cysteine lipidation. Cys-28 carries S-diacylglycerol cysteine lipidation. The tract at residues 126-145 (GSTADGQTPAGGHSVPNSGG) is disordered.

The protein belongs to the UPF0098 family.

It is found in the cell membrane. The polypeptide is Putative lipoprotein LppC (lppC) (Mycobacterium tuberculosis (strain CDC 1551 / Oshkosh)).